The chain runs to 534 residues: Coiled-coil domain-containing protein 183 (534 aa).

Coiled-coil stretches lie at residues 10-54 (EEQT…NIRR), 136-209 (DASK…DMKI), and 323-396 (LAQR…HSNM).

This is Coiled-coil domain-containing protein 183 (CCDC183) from Homo sapiens (Human).